The sequence spans 180 residues: Translation initiation factor IF-3 (180 aa).

The protein belongs to the IF-3 family. Monomer.

It is found in the cytoplasm. In terms of biological role, IF-3 binds to the 30S ribosomal subunit and shifts the equilibrium between 70S ribosomes and their 50S and 30S subunits in favor of the free subunits, thus enhancing the availability of 30S subunits on which protein synthesis initiation begins. This is Translation initiation factor IF-3 from Salmonella typhimurium (strain LT2 / SGSC1412 / ATCC 700720).